We begin with the raw amino-acid sequence, 518 residues long: Phenylacetate 2-hydroxylase (518 aa).

Residue Cys-437 coordinates heme.

It belongs to the cytochrome P450 family.

The enzyme catalyses 2-phenylacetate + reduced [NADPH--hemoprotein reductase] + O2 = (2-hydroxyphenyl)acetate + oxidized [NADPH--hemoprotein reductase] + H2O + H(+). The protein operates within aromatic compound metabolism; phenylacetate degradation. Its function is as follows. Catalyzes the hydroxylation of phenylacetate to 2-hydroxyphenylacetate in the homogentisate pathway. The homogentisate pathway is used to catabolize phenylacetate and use it as a carbon source. Can also catalyze the hydroxylation of 3-hydroxyphenylacetate to 2,5-dihydroxyphenylacetate (homogentisate) at low efficiency. The chain is Phenylacetate 2-hydroxylase (phacA) from Emericella nidulans (Aspergillus nidulans).